Here is a 456-residue protein sequence, read N- to C-terminus: Exodeoxyribonuclease 7 large subunit (456 aa).

Belongs to the XseA family. Heterooligomer composed of large and small subunits.

It localises to the cytoplasm. The enzyme catalyses Exonucleolytic cleavage in either 5'- to 3'- or 3'- to 5'-direction to yield nucleoside 5'-phosphates.. In terms of biological role, bidirectionally degrades single-stranded DNA into large acid-insoluble oligonucleotides, which are then degraded further into small acid-soluble oligonucleotides. The polypeptide is Exodeoxyribonuclease 7 large subunit (Shigella flexneri serotype 5b (strain 8401)).